The chain runs to 172 residues: Odorant-binding protein (172 aa).

The first 15 residues, 1–15 (MVKFLLIVLALGVSC), serve as a signal peptide directing secretion. 2 disulfide bridges follow: C60–C64 and C79–C170.

The protein belongs to the calycin superfamily. Lipocalin family. Homodimer.

Its subcellular location is the secreted. This protein is found in nasal epithelium and it binds a wide variety of chemical odorants. The polypeptide is Odorant-binding protein (Obp1f) (Rattus norvegicus (Rat)).